The chain runs to 2196 residues: Genome polyprotein (2196 aa).

A lipid anchor (N-myristoyl glycine; by host) is attached at glycine 2. Residues 2–1506 lie on the Cytoplasmic side of the membrane; it reads GAQVSTQKTG…HVSRAFICLQ (1505 aa). Residues 568 to 584 form an amphipathic alpha-helix region; sequence DLQGDSEHAVESAVSRV. Active-site for protease 2A activity residues include histidine 883 and aspartate 901. Positions 918 and 920 each coordinate Zn(2+). Cysteine 972 acts as the For protease 2A activity in catalysis. Positions 978 and 980 each coordinate Zn(2+). The interval 1112–1184 is membrane-binding; the sequence is NNGWLKKFTE…EQSAPSQSDQ (73 aa). The interval 1112–1250 is oligomerization; the sequence is NNGWLKKFTE…SPGAGKSVAT (139 aa). Positions 1133 to 1137 are RNA-binding; sequence AIKIQ. One can recognise an SF3 helicase domain in the interval 1216–1372; that stretch reads EKKMSNYIQF…SMYSQNGKIN (157 aa). 3 residues coordinate Zn(2+): cysteine 1380, cysteine 1392, and cysteine 1397. The C4-type; degenerate zinc finger occupies 1380–1397; the sequence is CDEECCPVNFKKCCPLVC. Positions 1424 to 1431 are RNA-binding; that stretch reads EYNHRHSV. The oligomerization stretch occupies residues 1435–1440; it reads LEALFQ. The stretch at 1507–1522 is an intramembrane region; sequence ALTTFVSVAGIIYIIY. Residues 1523 to 2196 are Cytoplasmic-facing; sequence KLFAGFQGAY…TLRRKWLDSF (674 aa). Residue tyrosine 1532 is modified to O-(5'-phospho-RNA)-tyrosine. The region spanning 1552 to 1730 is the Peptidase C3 domain; the sequence is GPAFEFAVAM…FSAALLKHYF (179 aa). Residues histidine 1591, glutamate 1622, and cysteine 1698 each act as for protease 3C activity in the active site. The 117-residue stretch at 1961-2077 folds into the RdRp catalytic domain; that stretch reads GHLIAFDYSG…SYPWPIDASL (117 aa). The Mg(2+) site is built by aspartate 1967 and aspartate 2063.

The protein belongs to the picornaviruses polyprotein family. In terms of assembly, interacts with capsid protein VP1 and capsid protein VP3 to form heterotrimeric protomers. As to quaternary structure, interacts with capsid protein VP0, and capsid protein VP3 to form heterotrimeric protomers. Five protomers subsequently associate to form pentamers which serve as building blocks for the capsid. Interacts with capsid protein VP2, capsid protein VP3 and capsid protein VP4 following cleavage of capsid protein VP0. Interacts with capsid protein VP1 and capsid protein VP3 in the mature capsid. In terms of assembly, interacts with capsid protein VP0 and capsid protein VP1 to form heterotrimeric protomers. Five protomers subsequently associate to form pentamers which serve as building blocks for the capsid. Interacts with capsid protein VP4 in the mature capsid. Interacts with protein 2C; this interaction may be important for virion morphogenesis. As to quaternary structure, interacts with capsid protein VP1 and capsid protein VP3. Homodimer. In terms of assembly, homohexamer; forms a hexameric ring structure with 6-fold symmetry characteristic of AAA+ ATPases. Interacts (via N-terminus) with host RTN3 (via reticulon domain); this interaction is important for viral replication. Interacts with capsid protein VP3; this interaction may be important for virion morphogenesis. As to quaternary structure, interacts with protein 3CD. Homodimer. Interacts with host GBF1. Interacts (via GOLD domain) with host ACBD3 (via GOLD domain); this interaction allows the formation of a viral protein 3A/ACBD3 heterotetramer with a 2:2 stoichiometry, which will stimulate the recruitment of host PI4KB in order to synthesize PI4P at the viral RNA replication sites. In terms of assembly, interacts with RNA-directed RNA polymerase. As to quaternary structure, interacts with protein 3AB and with RNA-directed RNA polymerase. Interacts with Viral protein genome-linked and with protein 3CD. The cofactor is Mg(2+). Specific enzymatic cleavages in vivo by the viral proteases yield processing intermediates and the mature proteins. In terms of processing, myristoylation is required for the formation of pentamers during virus assembly. Further assembly of 12 pentamers and a molecule of genomic RNA generates the provirion. Post-translationally, during virion maturation, immature virions are rendered infectious following cleavage of VP0 into VP4 and VP2. This maturation seems to be an autocatalytic event triggered by the presence of RNA in the capsid and it is followed by a conformational change infectious virion. Myristoylation is required during RNA encapsidation and formation of the mature virus particle. In terms of processing, VPg is uridylylated by the polymerase into VPg-pUpU. This acts as a nucleotide-peptide primer for the genomic RNA replication.

It is found in the virion. The protein resides in the host cytoplasm. It localises to the host cytoplasmic vesicle membrane. Its subcellular location is the host nucleus. The catalysed reaction is a ribonucleoside 5'-triphosphate + H2O = a ribonucleoside 5'-diphosphate + phosphate + H(+). It carries out the reaction Selective cleavage of Tyr-|-Gly bond in the picornavirus polyprotein.. The enzyme catalyses RNA(n) + a ribonucleoside 5'-triphosphate = RNA(n+1) + diphosphate. It catalyses the reaction Selective cleavage of Gln-|-Gly bond in the poliovirus polyprotein. In other picornavirus reactions Glu may be substituted for Gln, and Ser or Thr for Gly.. With respect to regulation, replication or transcription is subject to high level of random mutations by the nucleotide analog ribavirin. Its function is as follows. Forms an icosahedral capsid of pseudo T=3 symmetry with capsid proteins VP2 and VP3. The capsid is 300 Angstroms in diameter, composed of 60 copies of each capsid protein and enclosing the viral positive strand RNA genome. Capsid protein VP1 mainly forms the vertices of the capsid. Capsid protein VP1 interacts with host cell receptor to provide virion attachment to target host cells. This attachment induces virion internalization. Tyrosine kinases are probably involved in the entry process. After binding to its receptor, the capsid undergoes conformational changes. Capsid protein VP1 N-terminus (that contains an amphipathic alpha-helix) and capsid protein VP4 are externalized. Together, they shape a pore in the host membrane through which viral genome is translocated to host cell cytoplasm. Forms an icosahedral capsid of pseudo T=3 symmetry with capsid proteins VP2 and VP3. The capsid is 300 Angstroms in diameter, composed of 60 copies of each capsid protein and enclosing the viral positive strand RNA genome. In terms of biological role, lies on the inner surface of the capsid shell. After binding to the host receptor, the capsid undergoes conformational changes. Capsid protein VP4 is released, Capsid protein VP1 N-terminus is externalized, and together, they shape a pore in the host membrane through which the viral genome is translocated into the host cell cytoplasm. Functionally, component of immature procapsids, which is cleaved into capsid proteins VP4 and VP2 after maturation. Allows the capsid to remain inactive before the maturation step. Its function is as follows. Cysteine protease that cleaves viral polyprotein and specific host proteins. It is responsible for the autocatalytic cleavage between the P1 and P2 regions, which is the first cleavage occurring in the polyprotein. Also cleaves the host translation initiation factor EIF4G1, in order to shut down the capped cellular mRNA translation. Inhibits the host nucleus-cytoplasm protein and RNA trafficking by cleaving host members of the nuclear pores. Counteracts stress granule formation probably by antagonizing its assembly or promoting its dissassembly. Plays an essential role in the virus replication cycle by acting as a viroporin. Creates a pore in the host endoplasmic reticulum and as a consequence releases Ca2+ in the cytoplasm of infected cell. In turn, high levels of cytoplasmic calcium may trigger membrane trafficking and transport of viral ER-associated proteins to viroplasms, sites of viral genome replication. In terms of biological role, induces and associates with structural rearrangements of intracellular membranes. Displays RNA-binding, nucleotide binding and NTPase activities. May play a role in virion morphogenesis and viral RNA encapsidation by interacting with the capsid protein VP3. Functionally, localizes the viral replication complex to the surface of membranous vesicles. Together with protein 3CD binds the Cis-Active RNA Element (CRE) which is involved in RNA synthesis initiation. Acts as a cofactor to stimulate the activity of 3D polymerase, maybe through a nucleid acid chaperone activity. Its function is as follows. Localizes the viral replication complex to the surface of membranous vesicles. It inhibits host cell endoplasmic reticulum-to-Golgi apparatus transport and causes the disassembly of the Golgi complex, possibly through GBF1 interaction. This would result in depletion of MHC, trail receptors and IFN receptors at the host cell surface. Plays an essential role in viral RNA replication by recruiting ACBD3 and PI4KB at the viral replication sites, thereby allowing the formation of the rearranged membranous structures where viral replication takes place. Acts as a primer for viral RNA replication and remains covalently bound to viral genomic RNA. VPg is uridylylated prior to priming replication into VPg-pUpU. The oriI viral genomic sequence may act as a template for this. The VPg-pUpU is then used as primer on the genomic RNA poly(A) by the RNA-dependent RNA polymerase to replicate the viral genome. During genome replication, the VPg-RNA linkage is removed by the host TDP2, thereby accelerating replication. During the late stage of the replication cycle, host TDP2 is excluded from sites of viral RNA synthesis and encapsidation, allowing for the generation of progeny virions. In terms of biological role, involved in the viral replication complex and viral polypeptide maturation. It exhibits protease activity with a specificity and catalytic efficiency that is different from protease 3C. Protein 3CD lacks polymerase activity. Protein 3CD binds to the 5'UTR of the viral genome. Functionally, replicates the viral genomic RNA on the surface of intracellular membranes. May form linear arrays of subunits that propagate along a strong head-to-tail interaction called interface-I. Covalently attaches UMP to a tyrosine of VPg, which is used to prime RNA synthesis. The positive stranded RNA genome is first replicated at virus induced membranous vesicles, creating a dsRNA genomic replication form. This dsRNA is then used as template to synthesize positive stranded RNA genomes. ss(+)RNA genomes are either translated, replicated or encapsidated. Its function is as follows. Major viral protease that mediates proteolytic processing of the polyprotein. Cleaves host EIF5B, contributing to host translation shutoff. Also cleaves host PABPC1, contributing to host translation shutoff. Cleaves host NLRP1, triggers host N-glycine-mediated degradation of the autoinhibitory NLRP1 N-terminal fragment. This is Genome polyprotein from Homo sapiens (Human).